A 190-amino-acid chain; its full sequence is Apolipoprotein M (190 aa).

A signal peptide spans 1 to 17 (MFHQVWAALLYLYGLLF). Cystine bridges form between cysteine 23–cysteine 169, cysteine 95–cysteine 185, and cysteine 130–cysteine 159. Residues glutamate 138 and arginine 145 each contribute to the tetradecanoate site.

Belongs to the calycin superfamily. Lipocalin family. Highly divergent. As to quaternary structure, interacts with LRP2; LRP2 mediates APOM renal uptake and subsequent lysosomal degradation. As to expression, expressed by the liver; secreted in plasma.

The protein localises to the secreted. Probably involved in lipid transport. Can bind sphingosine-1-phosphate, myristic acid, palmitic acid and stearic acid, retinol, all-trans-retinoic acid and 9-cis-retinoic acid. This Rattus norvegicus (Rat) protein is Apolipoprotein M (Apom).